A 131-amino-acid polypeptide reads, in one-letter code: Squamosa promoter-binding protein 1 (131 aa).

Residues 1 to 10 show a composition bias toward basic and acidic residues; the sequence is MDTSKGEGKR. A disordered region spans residues 1–52; it reads MDTSKGEGKRVIKLPGSQEQGEEEDDIGEDSKKTRALTPSGKRASGSTQRSC. The SBP-type zinc-finger motif lies at 49 to 126; that stretch reads QRSCQVENCA…AGHNERRRKS (78 aa). The Zn(2+) site is built by Cys52, Cys57, Cys74, His77, Cys93, Cys96, His100, and Cys112. A Bipartite nuclear localization signal motif is present at residues 109–125; that stretch reads KRSCRRRLAGHNERRRK.

It localises to the nucleus. In terms of biological role, probable transcriptional factor. Binds to the promoter of the SQUAMOSA gene. This Antirrhinum majus (Garden snapdragon) protein is Squamosa promoter-binding protein 1 (SBP1).